Consider the following 299-residue polypeptide: Probable lipid kinase YegS-like (299 aa).

Positions 2-133 constitute a DAGKc domain; the sequence is EKNPITLLIL…IDIAKVNDGH (132 aa). Residues Thr-40, 66-72, and Thr-95 contribute to the ATP site; that span reads GDGTVNE. Mg(2+)-binding residues include Leu-215, Asp-218, and Leu-220. The Proton acceptor role is filled by Glu-271.

It belongs to the diacylglycerol/lipid kinase family. YegS lipid kinase subfamily. Requires Mg(2+) as cofactor. Ca(2+) is required as a cofactor.

It localises to the cytoplasm. Probably phosphorylates lipids; the in vivo substrate is unknown. The polypeptide is Probable lipid kinase YegS-like (Pectobacterium atrosepticum (strain SCRI 1043 / ATCC BAA-672) (Erwinia carotovora subsp. atroseptica)).